The primary structure comprises 496 residues: Lysine--tRNA ligase (496 aa).

2 residues coordinate Mg(2+): Glu405 and Glu412.

The protein belongs to the class-II aminoacyl-tRNA synthetase family. In terms of assembly, homodimer. Mg(2+) serves as cofactor.

Its subcellular location is the cytoplasm. The catalysed reaction is tRNA(Lys) + L-lysine + ATP = L-lysyl-tRNA(Lys) + AMP + diphosphate. The polypeptide is Lysine--tRNA ligase (Vesicomyosocius okutanii subsp. Calyptogena okutanii (strain HA)).